Consider the following 452-residue polypeptide: MSLDIVILAAGQGTRMRSALPKVLHPVAGQSMLGHVIATARALQPRSIQVVIGHGAEQVRQRLAGDDLNFVVQAEQLGTGHAVAQALPHLSAERVLILYGDVPLIEAETLQRLLQKVGPEQLALLTVTLDDPTGYGRIVRDGRGEVQAIVEHKDASADQRAIREGNTGILAVPGSRIGEWLGRLSNSNAQGEYYLTDVIAMAVADGLRVATEQPADAMEVQGANDRIQLAELERHYQLRAARRLMAQGVTLRDPARFDLRGEVSVGRDVLIDVNVVLEGRVVIEDDVQIGPNCVIKDSTLRRGAVVKANSHLEGAVMGEGADCGPFARLRPGSLLGAKAHVGNFVEMKNASLGDGAKAGHLSYLGDAEIGARSNIGAGTITCNYDGANKFRTVMGEDVFIGSNSSLVAPLNLGDGATTGAGSTITDDVPAHTLALGRGRQRNIDGWQRPTKK.

The segment at 1–226 is pyrophosphorylase; the sequence is MSLDIVILAA…AMEVQGANDR (226 aa). Residues 8 to 11, lysine 22, glutamine 73, 78 to 79, 99 to 101, glycine 136, glutamate 151, asparagine 166, and asparagine 224 each bind UDP-N-acetyl-alpha-D-glucosamine; these read LAAG, GT, and YGD. Aspartate 101 lines the Mg(2+) pocket. Asparagine 224 serves as a coordination point for Mg(2+). The linker stretch occupies residues 227 to 247; sequence IQLAELERHYQLRAARRLMAQ. Residues 248–452 are N-acetyltransferase; that stretch reads GVTLRDPARF…IDGWQRPTKK (205 aa). Residues arginine 330 and lysine 348 each contribute to the UDP-N-acetyl-alpha-D-glucosamine site. Histidine 360 acts as the Proton acceptor in catalysis. Residues tyrosine 363 and asparagine 374 each coordinate UDP-N-acetyl-alpha-D-glucosamine. Acetyl-CoA is bound by residues alanine 377, 383 to 384, serine 402, alanine 420, and arginine 437; that span reads NY.

In the N-terminal section; belongs to the N-acetylglucosamine-1-phosphate uridyltransferase family. It in the C-terminal section; belongs to the transferase hexapeptide repeat family. Homotrimer. It depends on Mg(2+) as a cofactor.

Its subcellular location is the cytoplasm. The catalysed reaction is alpha-D-glucosamine 1-phosphate + acetyl-CoA = N-acetyl-alpha-D-glucosamine 1-phosphate + CoA + H(+). It catalyses the reaction N-acetyl-alpha-D-glucosamine 1-phosphate + UTP + H(+) = UDP-N-acetyl-alpha-D-glucosamine + diphosphate. It functions in the pathway nucleotide-sugar biosynthesis; UDP-N-acetyl-alpha-D-glucosamine biosynthesis; N-acetyl-alpha-D-glucosamine 1-phosphate from alpha-D-glucosamine 6-phosphate (route II): step 2/2. It participates in nucleotide-sugar biosynthesis; UDP-N-acetyl-alpha-D-glucosamine biosynthesis; UDP-N-acetyl-alpha-D-glucosamine from N-acetyl-alpha-D-glucosamine 1-phosphate: step 1/1. Its pathway is bacterial outer membrane biogenesis; LPS lipid A biosynthesis. Functionally, catalyzes the last two sequential reactions in the de novo biosynthetic pathway for UDP-N-acetylglucosamine (UDP-GlcNAc). The C-terminal domain catalyzes the transfer of acetyl group from acetyl coenzyme A to glucosamine-1-phosphate (GlcN-1-P) to produce N-acetylglucosamine-1-phosphate (GlcNAc-1-P), which is converted into UDP-GlcNAc by the transfer of uridine 5-monophosphate (from uridine 5-triphosphate), a reaction catalyzed by the N-terminal domain. In Stutzerimonas stutzeri (strain A1501) (Pseudomonas stutzeri), this protein is Bifunctional protein GlmU.